Reading from the N-terminus, the 489-residue chain is Cobyric acid synthase (489 aa).

The region spanning 252–441 (ALTIGVIQLP…IHGIFANTEF (190 aa)) is the GATase cobBQ-type domain. Cys-330 functions as the Nucleophile in the catalytic mechanism. Residue His-433 is part of the active site.

It belongs to the CobB/CobQ family. CobQ subfamily.

It participates in cofactor biosynthesis; adenosylcobalamin biosynthesis. Functionally, catalyzes amidations at positions B, D, E, and G on adenosylcobyrinic A,C-diamide. NH(2) groups are provided by glutamine, and one molecule of ATP is hydrogenolyzed for each amidation. The polypeptide is Cobyric acid synthase (Herpetosiphon aurantiacus (strain ATCC 23779 / DSM 785 / 114-95)).